The sequence spans 493 residues: 3-octaprenyl-4-hydroxybenzoate carboxy-lyase (493 aa).

A Mn(2+)-binding site is contributed by Asn-172. Prenylated FMN contacts are provided by residues 175 to 177 (IYR), 189 to 191 (RWL), and 194 to 195 (RG). Mn(2+) is bound at residue Glu-238. Asp-287 serves as the catalytic Proton donor.

Belongs to the UbiD family. Homohexamer. Prenylated FMN serves as cofactor. Mn(2+) is required as a cofactor.

Its subcellular location is the cell membrane. The catalysed reaction is a 4-hydroxy-3-(all-trans-polyprenyl)benzoate + H(+) = a 2-(all-trans-polyprenyl)phenol + CO2. It participates in cofactor biosynthesis; ubiquinone biosynthesis. Its function is as follows. Catalyzes the decarboxylation of 3-octaprenyl-4-hydroxy benzoate to 2-octaprenylphenol, an intermediate step in ubiquinone biosynthesis. This Shewanella piezotolerans (strain WP3 / JCM 13877) protein is 3-octaprenyl-4-hydroxybenzoate carboxy-lyase.